Consider the following 416-residue polypeptide: UDP-N-acetylglucosamine 1-carboxyvinyltransferase (416 aa).

Phosphoenolpyruvate is bound at residue 22–23 (KN). Arg92 lines the UDP-N-acetyl-alpha-D-glucosamine pocket. Catalysis depends on Cys116, which acts as the Proton donor. 2-(S-cysteinyl)pyruvic acid O-phosphothioketal is present on Cys116. Asp304 and Ile326 together coordinate UDP-N-acetyl-alpha-D-glucosamine.

Belongs to the EPSP synthase family. MurA subfamily.

It localises to the cytoplasm. The enzyme catalyses phosphoenolpyruvate + UDP-N-acetyl-alpha-D-glucosamine = UDP-N-acetyl-3-O-(1-carboxyvinyl)-alpha-D-glucosamine + phosphate. The protein operates within cell wall biogenesis; peptidoglycan biosynthesis. Its function is as follows. Cell wall formation. Adds enolpyruvyl to UDP-N-acetylglucosamine. The protein is UDP-N-acetylglucosamine 1-carboxyvinyltransferase of Solidesulfovibrio magneticus (strain ATCC 700980 / DSM 13731 / RS-1) (Desulfovibrio magneticus).